The primary structure comprises 958 residues: Voltage-gated inwardly rectifying potassium channel KCNH6 (958 aa).

The Cytoplasmic segment spans residues 1–261 (MPVRRGHVAP…YSPFKAVWDW (261 aa)). The 30-residue stretch at 41-70 (IIYCNDGFCELFGYSRVEVMQQPCTCDFLT) folds into the PAS domain. One can recognise a PAC domain in the interval 92-144 (CKVDILYYRKDASSFRCLVDVVPVKNEDGAVIMFILNFEDLAQLLAKCSSRSL). Residues 262–282 (LILLLVIYTAVFTPYSAAFLL) traverse the membrane as a helical segment. The Extracellular segment spans residues 283-298 (SDQDESRRGACSYTCS). The helical transmembrane segment at 299-319 (PLTVVDLIVDIMFVVDIVINF) threads the bilayer. Topologically, residues 320-340 (RTTYVNTNDEVVSHPRRIAVH) are cytoplasmic. Residues 341–361 (YFKGWFLIDMVAAIPFDLLIF) traverse the membrane as a helical segment. The Extracellular segment spans residues 362–370 (RTGSDETTT). The helical; Voltage-sensor transmembrane segment at 371–391 (LIGLLKTARLLRLVRVARKLD) threads the bilayer. At 392–398 (RYSEYGA) the chain is on the cytoplasmic side. A helical membrane pass occupies residues 399-419 (AVLFLLMCTFALIAHWLACIW). Residues 420 to 463 (YAIGNVERPYLEHKIGWLDSLGVQLGKRYNGSDPASGPSVQDKY) are Extracellular-facing. Asparagine 449 carries an N-linked (GlcNAc...) (complex) asparagine glycan. The segment at residues 464–484 (VTALYFTFSSLTSVGFGNVSP) is an intramembrane region (pore-forming). Residues 476 to 481 (SVGFGN) carry the Selectivity filter motif. At 485 to 490 (NTNSEK) the chain is on the extracellular side. The helical transmembrane segment at 491–511 (VFSICVMLIGSLMYASIFGNV) threads the bilayer. Residues 512–958 (SAIIQRLYSG…DPGFAGSWGH (447 aa)) lie on the Cytoplasmic side of the membrane. The interval 594–694 (AFSGAGKGCL…IQRADLLEVL (101 aa)) is cNMP-binding domain. Disordered stretches follow at residues 720 to 751 (GLHS…PPLS) and 845 to 910 (TTSP…PPLA). Residues 724-745 (SPRQAPGSQDHQGFFLSDNQSD) show a composition bias toward polar residues.

This sequence belongs to the potassium channel family. H (Eag) (TC 1.A.1.20) subfamily. Kv11.2/KCNH6 sub-subfamily. The potassium channel is probably composed of a homo- or heterotetrameric complex of pore-forming alpha subunits that can associate only within their subfamily. In terms of tissue distribution, expressed in prolactin-secreting adenomas.

It localises to the cell membrane. It catalyses the reaction K(+)(in) = K(+)(out). Functionally, pore-forming (alpha) subunit of voltage-gated inwardly rectifying potassium channel. Characterized by unusual gating kinetics by producing relatively small outward currents during membrane depolarization and large inward currents during subsequent repolarization which reflect a rapid inactivation during depolarization and quick recovery from inactivation but slow deactivation (closing) during repolarization. Activates even more slowly than KCNH2. This is Voltage-gated inwardly rectifying potassium channel KCNH6 from Homo sapiens (Human).